The chain runs to 194 residues: Leucyl/phenylalanyl-tRNA--protein transferase (194 aa).

This sequence belongs to the L/F-transferase family.

It is found in the cytoplasm. The enzyme catalyses N-terminal L-lysyl-[protein] + L-leucyl-tRNA(Leu) = N-terminal L-leucyl-L-lysyl-[protein] + tRNA(Leu) + H(+). It catalyses the reaction N-terminal L-arginyl-[protein] + L-leucyl-tRNA(Leu) = N-terminal L-leucyl-L-arginyl-[protein] + tRNA(Leu) + H(+). The catalysed reaction is L-phenylalanyl-tRNA(Phe) + an N-terminal L-alpha-aminoacyl-[protein] = an N-terminal L-phenylalanyl-L-alpha-aminoacyl-[protein] + tRNA(Phe). Its function is as follows. Functions in the N-end rule pathway of protein degradation where it conjugates Leu, Phe and, less efficiently, Met from aminoacyl-tRNAs to the N-termini of proteins containing an N-terminal arginine or lysine. The polypeptide is Leucyl/phenylalanyl-tRNA--protein transferase (Chlorobium limicola (strain DSM 245 / NBRC 103803 / 6330)).